A 62-amino-acid chain; its full sequence is Large ribosomal subunit protein uL30 (62 aa).

This sequence belongs to the universal ribosomal protein uL30 family. In terms of assembly, part of the 50S ribosomal subunit.

This is Large ribosomal subunit protein uL30 from Thioalkalivibrio sulfidiphilus (strain HL-EbGR7).